The sequence spans 252 residues: Pantothenate synthetase (252 aa).

ATP is bound at residue M29 to H36. The active-site Proton donor is H36. Q60 provides a ligand contact to (R)-pantoate. Q60 is a binding site for beta-alanine. G146–D149 is a binding site for ATP. Q152 provides a ligand contact to (R)-pantoate. ATP-binding positions include V175 and C183–R186.

This sequence belongs to the pantothenate synthetase family. In terms of assembly, homodimer.

It is found in the cytoplasm. It catalyses the reaction (R)-pantoate + beta-alanine + ATP = (R)-pantothenate + AMP + diphosphate + H(+). It participates in cofactor biosynthesis; (R)-pantothenate biosynthesis; (R)-pantothenate from (R)-pantoate and beta-alanine: step 1/1. In terms of biological role, catalyzes the condensation of pantoate with beta-alanine in an ATP-dependent reaction via a pantoyl-adenylate intermediate. This Legionella pneumophila (strain Corby) protein is Pantothenate synthetase.